The primary structure comprises 311 residues: MSKTLNILELTSACIKLAQESGDIIRDVFKSGSLGIEMKSVDDPMTKADLLSQQHIIGSLRTIWSDIKIVGEEQCEIPTIDKKPPIDLLANDKDCIEKCPEEFKQLPIDDLIIFIDPLDATREFTLGRVGCVMTLIGISFKGKPIAGIIYQPFVDCNGDGTTDQSKWVGRTIWAIVGGGIPVKGIKDRRAPEDVGKVILTTTASHFNDKVQQAVDAIKPDKLLRAGGAGYKSLLVIENQADVYVFPTVGSKLWDICGPHAILLAVGGKLTDPQGNDIIYSTDPEKIENKNGIIITISNHQKYIDLLKNFKN.

D49 functions as the Proton acceptor in the catalytic mechanism. Positions 72, 116, 118, and 119 each coordinate Mg(2+). Catalysis depends on T121, which acts as the Proton acceptor. AMP-binding residues include T202, H205, G227, and K231. Residue D254 participates in Mg(2+) binding.

Belongs to the inositol monophosphatase superfamily. Mg(2+) serves as cofactor.

The catalysed reaction is adenosine 3',5'-bisphosphate + H2O = AMP + phosphate. It catalyses the reaction adenosine 2',5'-bisphosphate + H2O = AMP + phosphate. It carries out the reaction 3'-phosphoadenylyl sulfate + H2O = adenosine 5'-phosphosulfate + phosphate. The enzyme catalyses 1D-myo-inositol 1,4-bisphosphate + H2O = 1D-myo-inositol 4-phosphate + phosphate. The catalysed reaction is 1D-myo-inositol 1,3,4-trisphosphate + H2O = 1D-myo-inositol 3,4-bisphosphate + phosphate. Its activity is regulated as follows. Inhibited by Li(+) and Ca(2+), but not by Na(+). Functionally, phosphatase that converts 3'(2')-phosphoadenosine 5'-phosphate (PAP) to AMP and adenosine 3'-phosphate 5'-phosphosulfate (PAPS) to adenosine 5'-phosphosulfate (APS). Is also able to hydrolyze inositol 1,4-bisphosphate (Ins(1,4)P2) and inositol 1,3,4-trisphosphate (Ins(1,3,4)P3), but is not active on AMP, 3'-AMP, fructose-1,6-bisphosphate, Ins(1)P, Ins(2)P and Ins(1,4,5)P3. Probably prevents the toxic accumulation of PAP, a compound which inhibits a variety of proteins, including PAPS-utilizing enzymes such as sulfotransferases, and RNA processing enzymes. Could also play a role in inositol recycling and phosphoinositide metabolism. The chain is 3'(2'),5'-bisphosphate nucleotidase 1 (bpnt1) from Dictyostelium discoideum (Social amoeba).